We begin with the raw amino-acid sequence, 1213 residues long: A disintegrin and metalloproteinase with thrombospondin motifs 2 (1213 aa).

A signal peptide spans 1-28; the sequence is MDPPAGAARRLLCPALLLLLLPPPPLLL. Residues 29 to 260 constitute a propeptide that is removed on maturation; that stretch reads LPPPPASVRL…INSSRRRVRR (232 aa). Asn111 carries N-linked (GlcNAc...) asparagine glycosylation. A disordered region spans residues 211–232; that stretch reads YRRPPTPKPPPVSEPQALDTGV. Over residues 214 to 223 the composition is skewed to pro residues; the sequence is PPTPKPPPVS. Asn252 carries an N-linked (GlcNAc...) asparagine glycan. The Peptidase M12B domain maps to 267 to 471; that stretch reads YNIEVLLGVD…HSYDCLRDDP (205 aa). 10 disulfides stabilise this stretch: Cys344–Cys393, Cys387–Cys466, Cys426–Cys452, Cys493–Cys518, Cys504–Cys527, Cys513–Cys546, Cys540–Cys551, Cys574–Cys611, Cys578–Cys616, and Cys589–Cys601. Position 409 (His409) interacts with Zn(2+). Glu410 is a catalytic residue. Zn(2+)-binding residues include His413 and His419. Residues 480 to 560 enclose the Disintegrin domain; it reads PQLPGLHYSM…CIWLTPDILK (81 aa). One can recognise a TSP type-1 1 domain in the interval 561–617; the sequence is RDGNWGAWTPFGSCSRTCGTGVKFRTRQCDNPHPANGGRTCSGLAYDFQLCNPQDCP. The Cell attachment site signature appears at 692 to 694; it reads RGD. The tract at residues 723–851 is spacer; that stretch reads CKVVKGTFTR…LNVDDNNVLE (129 aa). TSP type-1 domains are found at residues 855–913, 915–975, and 976–1030; these read VRHE…NPQE, SQPV…NREL, and CPGR…APCP. Asn949, Asn950, and Asn994 each carry an N-linked (GlcNAc...) asparagine glycan. 3 cysteine pairs are disulfide-bonded: Cys988-Cys1024, Cys992-Cys1029, and Cys1003-Cys1013. The N-linked (GlcNAc...) asparagine glycan is linked to Asn1032. Residues 1060–1098 form the PLAC domain; the sequence is SKDQCQGDKSMFCRMEVLSRYCSIPSYNKLCCKSCNPPR. 3 N-linked (GlcNAc...) asparagine glycosylation sites follow: Asn1099, Asn1147, and Asn1152.

As to quaternary structure, may belong to a multimeric complex. Binds specifically to collagen type XIV. The cofactor is Zn(2+). The precursor is cleaved by a furin endopeptidase. Post-translationally, glycosylated. Can be O-fucosylated by POFUT2 on a serine or a threonine residue found within the consensus sequence C1-X(2)-(S/T)-C2-G of the TSP type-1 repeat domains where C1 and C2 are the first and second cysteine residue of the repeat, respectively. Fucosylated repeats can then be further glycosylated by the addition of a beta-1,3-glucose residue by the glucosyltransferase, B3GALTL. Fucosylation mediates the efficient secretion of ADAMTS family members. Can also be C-glycosylated with one or two mannose molecules on tryptophan residues within the consensus sequence W-X-X-W of the TPRs, and N-glycosylated. These other glycosylations can also facilitate secretion.

Its subcellular location is the secreted. It localises to the extracellular space. The protein localises to the extracellular matrix. The enzyme catalyses Cleaves the N-propeptide of collagen chain alpha1(I) at Pro-|-Gln and of alpha1(II) and alpha2(I) at Ala-|-Gln.. In terms of biological role, cleaves the propeptides of type I and II collagen prior to fibril assembly. Does not act on type III collagen. Cleaves lysyl oxidase LOX at a site downstream of its propeptide cleavage site to produce a short LOX form with reduced collagen-binding activity. This is A disintegrin and metalloproteinase with thrombospondin motifs 2 (Adamts2) from Mus musculus (Mouse).